We begin with the raw amino-acid sequence, 351 residues long: Transmembrane protein 185-like (351 aa).

A run of 8 helical transmembrane segments spans residues 16–36 (LIYA…DGII), 41–61 (WAVF…ASVG), 81–101 (FKAM…EVLV), 113–133 (WLLV…ACVW), 154–174 (FIFI…VVCV), 178–198 (ILMS…VLFL), 212–232 (ITMA…EILL), and 244–264 (YVPV…TTFG).

Belongs to the TMEM185 family.

It localises to the membrane. This is Transmembrane protein 185-like from Danio rerio (Zebrafish).